Here is a 523-residue protein sequence, read N- to C-terminus: Glycerate kinase (523 aa).

Phosphoserine is present on Ser-60. An N6-acetyllysine modification is found at Lys-200.

It belongs to the glycerate kinase type-2 family. Expressed in the hippocampus, callus, brain, cerebellum, renal cortex interstitial cells, epithelium of interlobular bile duct and skeletal muscle.

Its subcellular location is the cytoplasm. It carries out the reaction (R)-glycerate + ATP = (2R)-3-phosphoglycerate + ADP + H(+). This Mus musculus (Mouse) protein is Glycerate kinase (Glyctk).